Here is a 291-residue protein sequence, read N- to C-terminus: MEMO1 family protein TK1477 (291 aa).

This sequence belongs to the MEMO1 family.

The chain is MEMO1 family protein TK1477 from Thermococcus kodakarensis (strain ATCC BAA-918 / JCM 12380 / KOD1) (Pyrococcus kodakaraensis (strain KOD1)).